A 457-amino-acid polypeptide reads, in one-letter code: Allantoinase (457 aa).

Zn(2+) is bound by residues His58, His60, Lys145, His181, His237, and Asp310. Position 145 is an N6-carboxylysine (Lys145).

Belongs to the metallo-dependent hydrolases superfamily. Allantoinase family. As to quaternary structure, homotetramer. Zn(2+) is required as a cofactor. In terms of processing, carboxylation allows a single lysine to coordinate two zinc ions.

It catalyses the reaction (S)-allantoin + H2O = allantoate + H(+). It functions in the pathway nitrogen metabolism; (S)-allantoin degradation; allantoate from (S)-allantoin: step 1/1. Functionally, catalyzes the conversion of allantoin (5-ureidohydantoin) to allantoic acid by hydrolytic cleavage of the five-member hydantoin ring. This Solibacter usitatus (strain Ellin6076) protein is Allantoinase.